Consider the following 87-residue polypeptide: Large ribosomal subunit protein eL34 (87 aa).

This sequence belongs to the eukaryotic ribosomal protein eL34 family.

The polypeptide is Large ribosomal subunit protein eL34 (Sulfurisphaera tokodaii (strain DSM 16993 / JCM 10545 / NBRC 100140 / 7) (Sulfolobus tokodaii)).